We begin with the raw amino-acid sequence, 245 residues long: Ribonuclease 3 (245 aa).

The RNase III domain maps to 18-146 (LSEFLENLSI…FVGAIYLDSG (129 aa)). Glu59 contacts Mg(2+). The active site involves Asp63. The Mg(2+) site is built by Asp132 and Glu135. The active site involves Glu135. Residues 173 to 242 (DYKSLLQEYV…AEVALKAMED (70 aa)) form the DRBM domain.

This sequence belongs to the ribonuclease III family. Homodimer. Mg(2+) serves as cofactor.

It localises to the cytoplasm. The catalysed reaction is Endonucleolytic cleavage to 5'-phosphomonoester.. In terms of biological role, digests double-stranded RNA. Involved in the processing of primary rRNA transcript to yield the immediate precursors to the large and small rRNAs (23S and 16S). Processes some mRNAs, and tRNAs when they are encoded in the rRNA operon. Processes pre-crRNA and tracrRNA of type II CRISPR loci if present in the organism. The protein is Ribonuclease 3 of Borreliella afzelii (strain PKo) (Borrelia afzelii).